Consider the following 122-residue polypeptide: Large ribosomal subunit protein uL14 (122 aa).

It belongs to the universal ribosomal protein uL14 family. As to quaternary structure, part of the 50S ribosomal subunit. Forms a cluster with proteins L3 and L19. In the 70S ribosome, L14 and L19 interact and together make contacts with the 16S rRNA in bridges B5 and B8.

Functionally, binds to 23S rRNA. Forms part of two intersubunit bridges in the 70S ribosome. The protein is Large ribosomal subunit protein uL14 of Rickettsia typhi (strain ATCC VR-144 / Wilmington).